Consider the following 692-residue polypeptide: Elongation factor G (692 aa).

Residues 8 to 282 form the tr-type G domain; the sequence is EKVRNIGIAA…AVVDYLPAPS (275 aa). GTP contacts are provided by residues 17–24, 81–85, and 135–138; these read AHIDAGKT, DTPGH, and NKMD.

This sequence belongs to the TRAFAC class translation factor GTPase superfamily. Classic translation factor GTPase family. EF-G/EF-2 subfamily.

It localises to the cytoplasm. Catalyzes the GTP-dependent ribosomal translocation step during translation elongation. During this step, the ribosome changes from the pre-translocational (PRE) to the post-translocational (POST) state as the newly formed A-site-bound peptidyl-tRNA and P-site-bound deacylated tRNA move to the P and E sites, respectively. Catalyzes the coordinated movement of the two tRNA molecules, the mRNA and conformational changes in the ribosome. The sequence is that of Elongation factor G from Nostoc punctiforme (strain ATCC 29133 / PCC 73102).